The primary structure comprises 150 residues: Large ribosomal subunit protein uL13 (150 aa).

The interval 130–150 (EHPHGAQQPQPYQLNPSASIK) is disordered. Over residues 136–150 (QQPQPYQLNPSASIK) the composition is skewed to polar residues.

The protein belongs to the universal ribosomal protein uL13 family. As to quaternary structure, part of the 50S ribosomal subunit.

This protein is one of the early assembly proteins of the 50S ribosomal subunit, although it is not seen to bind rRNA by itself. It is important during the early stages of 50S assembly. The chain is Large ribosomal subunit protein uL13 from Synechococcus sp. (strain RCC307).